We begin with the raw amino-acid sequence, 112 residues long: HTH-type transcriptional regulator YodB (112 aa).

Positions 6-105 (CPKMESAFSL…WADQFCEPGD (100 aa)) constitute an HTH hxlR-type domain.

Negatively regulates yodC and azoR1 which may contribute to the degradation of aromatic compounds. Probably positively regulates the catechol-specific transcription of mhqNOP, mhqED, and mhqA. This Bacillus subtilis (strain 168) protein is HTH-type transcriptional regulator YodB (yodB).